The following is a 302-amino-acid chain: Oxygen-dependent coproporphyrinogen-III oxidase (302 aa).

Ser-94 contacts substrate. His-98 and His-108 together coordinate a divalent metal cation. The active-site Proton donor is His-108. Asn-110–Arg-112 is a substrate binding site. Residues His-147 and His-177 each coordinate a divalent metal cation. The important for dimerization stretch occupies residues Tyr-242–Glu-277. Gly-260–Arg-262 contacts substrate.

It belongs to the aerobic coproporphyrinogen-III oxidase family. In terms of assembly, homodimer. A divalent metal cation is required as a cofactor.

Its subcellular location is the cytoplasm. It carries out the reaction coproporphyrinogen III + O2 + 2 H(+) = protoporphyrinogen IX + 2 CO2 + 2 H2O. It participates in porphyrin-containing compound metabolism; protoporphyrin-IX biosynthesis; protoporphyrinogen-IX from coproporphyrinogen-III (O2 route): step 1/1. Functionally, involved in the heme biosynthesis. Catalyzes the aerobic oxidative decarboxylation of propionate groups of rings A and B of coproporphyrinogen-III to yield the vinyl groups in protoporphyrinogen-IX. In Aeromonas salmonicida (strain A449), this protein is Oxygen-dependent coproporphyrinogen-III oxidase.